A 292-amino-acid polypeptide reads, in one-letter code: Undecaprenyl-diphosphatase (292 aa).

The next 7 helical transmembrane spans lie at 1-21 (MSLV…FLPV), 46-66 (FVTI…RADI), 90-110 (LGWY…LLEH), 114-134 (ALGN…LLAA), 192-212 (FLLS…STVP), 225-245 (VVGT…LLAW), and 253-273 (VFVV…LSGV).

The protein belongs to the UppP family.

The protein localises to the cell inner membrane. The catalysed reaction is di-trans,octa-cis-undecaprenyl diphosphate + H2O = di-trans,octa-cis-undecaprenyl phosphate + phosphate + H(+). Catalyzes the dephosphorylation of undecaprenyl diphosphate (UPP). Confers resistance to bacitracin. The polypeptide is Undecaprenyl-diphosphatase (Anaeromyxobacter sp. (strain K)).